The sequence spans 431 residues: Keratin, type I cytoskeletal 20 (431 aa).

Positions Met1 to Met23 are disordered. A head region spans residues Met1–Asn76. Ser13 is modified (phosphoserine; by MAPKAPK2, MAPKAPK3 and PKC). Residues Ser16 and Ser26 each carry the phosphoserine modification. The interval Gly77–Trp112 is coil 1A. One can recognise an IF rod domain in the interval Gly77–Thr388. The linker 1 stretch occupies residues Tyr113–Gln130. Residues Ile131–Leu222 form a coil 1B region. The segment at Arg223–Ile245 is linker 12. Positions Met246–Glu384 are coil 2. Positions Asp385 to Val431 are tail.

Belongs to the intermediate filament family. In terms of assembly, heterotetramer of two type I and two type II keratins. Associates with KRT8. Hyperphosphorylation at Ser-13 occurs during the early stages of apoptosis but becomes less prominent during the later stages. Phosphorylation at Ser-13 also increases in response to stress brought on by cell injury. Post-translationally, proteolytically cleaved by caspases during apoptosis. Cleavage occurs at Asp-235. As to expression, expressed at low levels in the more differentiated suprabasal regions of the small intestine, and at higher levels in the colon, mainly in the upper region and in scattered cells throughout the remaining epithelium. Also expressed in epithelial cells of bladder, ileum and stomach and at lower levels in pancreas and earskin. The phosphorylated form is nearly exclusively expressed in goblet cells of the small intestine and in the lumen-proximal cells of the colon (at protein level). Also expressed in jejunum and duodenum.

Functionally, plays a significant role in maintaining keratin filament organization in intestinal epithelia. When phosphorylated, plays a role in the secretion of mucin in the small intestine. This is Keratin, type I cytoskeletal 20 from Mus musculus (Mouse).